A 119-amino-acid polypeptide reads, in one-letter code: Large ribosomal subunit protein uL24 (119 aa).

The protein belongs to the universal ribosomal protein uL24 family. Part of the 50S ribosomal subunit.

One of two assembly initiator proteins, it binds directly to the 5'-end of the 23S rRNA, where it nucleates assembly of the 50S subunit. In terms of biological role, located at the polypeptide exit tunnel on the outside of the subunit. The polypeptide is Large ribosomal subunit protein uL24 (Methanococcus maripaludis (strain C5 / ATCC BAA-1333)).